The following is a 398-amino-acid chain: MTKTFRTLDDVDVKGKRVLLRVDLNVPMDAGKVTDTTRLERVMPTITELSGKGAKVILLAHFGRPKGRDDKNSLKPVAAALADVIKKPVGFADDCIGEPAAKAIAAMADGDILCLENTRFHPEEEKNDPAFVAKLAELGDIWVNDAFSAAHRAHATTEGLGHKLPAYAGRTMQAELVALNKALEAPVKPVIAIVGGAKVSTKIDLLENLVTKVQALVIGGGMANTFLHAQGVKVGKSLCEKDLAPTALRILDKAEAANCAIILPVDATVAYHFEANAPSFAYGLDAIPDDAMILDVGPRSIERIHAAIDDAATLVWNGPVGAFELTPFDKGTVEAAKHAAKRTKAGKLVSVAGGGDTVAALNHAGVADDFTYISTAGGAFLEWMEGKPLPGVEVLQVK.

Substrate contacts are provided by residues 23 to 25 (DLN), arginine 38, 61 to 64 (HFGR), arginine 119, and arginine 152. ATP is bound by residues lysine 202, glutamate 324, and 354-357 (GGDT).

This sequence belongs to the phosphoglycerate kinase family. In terms of assembly, monomer.

The protein resides in the cytoplasm. It catalyses the reaction (2R)-3-phosphoglycerate + ATP = (2R)-3-phospho-glyceroyl phosphate + ADP. The protein operates within carbohydrate degradation; glycolysis; pyruvate from D-glyceraldehyde 3-phosphate: step 2/5. The protein is Phosphoglycerate kinase of Rhodopseudomonas palustris (strain ATCC BAA-98 / CGA009).